The chain runs to 182 residues: Thioredoxin F-type, chloroplastic (182 aa).

A disordered region spans residues 1-22 (MPLSLRLAPSPTALSPTTGGFS). Residues 52-177 (KRGDSSVVRC…LVAAIETARS (126 aa)) enclose the Thioredoxin domain. Residues Cys102 and Cys105 each act as nucleophile in the active site. Residues Cys102 and Cys105 are joined by a disulfide bond.

It belongs to the thioredoxin family. Plant F-type subfamily. In terms of assembly, forms a complex with heterodimeric ferredoxin-thioredoxin reductase (FTR) and ferredoxin.

The protein resides in the plastid. Its subcellular location is the chloroplast. Its function is as follows. Participates in various redox reactions through the reversible oxidation of the active center dithiol to a disulfide. The F form is known to activate a number of enzymes of the photosynthetic carbon cycle. In Brassica napus (Rape), this protein is Thioredoxin F-type, chloroplastic (TRXF).